Reading from the N-terminus, the 160-residue chain is Vesicle transport protein SFT2B (160 aa).

At M1 the chain carries N-acetylmethionine. The Cytoplasmic segment spans residues 1–36 (MDKLKKVLSGQDTEDRSGLSEVVEASSLSWSTRIKG). Residue S9 is modified to Phosphoserine. The chain crosses the membrane as a helical span at residues 37-57 (FIACFAIGILCSLLGTVLLWV). The Lumenal segment spans residues 58-63 (PRKGLH). A helical membrane pass occupies residues 64–84 (LFAVFYTFGNIASIGSTIFLM). Residues 85 to 98 (GPVKQLKRMFEPTR) lie on the Cytoplasmic side of the membrane. Residues 99 to 119 (LIATIMVLLCFALTLCSAFWW) traverse the membrane as a helical segment. Residues 120 to 123 (HNKG) lie on the Lumenal side of the membrane. Residues 124-144 (LALIFCILQSLALTWYSLSFI) form a helical membrane-spanning segment. The Cytoplasmic segment spans residues 145 to 160 (PFARDAVKKCFAVCLA).

The protein belongs to the SFT2 family.

The protein resides in the membrane. May be involved in fusion of retrograde transport vesicles derived from an endocytic compartment with the Golgi complex. The polypeptide is Vesicle transport protein SFT2B (Homo sapiens (Human)).